Consider the following 608-residue polypeptide: Preterminal protein (608 aa).

Residues Arg-338–Arg-347 carry the Nuclear localization signal motif. The tract at residues Arg-342–Glu-377 is disordered. The residue at position 536 (Ser-536) is an O-(5'-phospho-DNA)-serine.

Belongs to the adenoviridae terminal protein family. In terms of assembly, heterodimer with the polymerase; this heterodimer binds to bp 9 to 18 of the genome. Interacts with host POU2F1; POU2F1 binds to the auxiliary sequences in the inverted terminal repeats and tethers the pTP-POL heterodimer to the origin DNA thereby participating in the assembly of the pre-initiation complex (POL-TP-DBP-NFIA-POU2F1). Preterminal protein is used to replicate viral genome, upon genomic encapsidation it is processed first into iTP and finally into TP by adenovirus protease.

The protein resides in the host nucleus matrix. Its function is as follows. Protein covalently bound to the viral DNA that acts as a primer for viral genomic replication by DNA strand displacement. Assembles on the viral origin of replication in an initiation complex with viral polymerase, DBP, host NFIA and host POU2F1/OCT1. During initiation, the polymerase covalently couples the first dCTP with Ser-580 of pTP. The terminal protein stimulates the template activity over 20 fold compared to protein-free templates. Neo-synthesized viral genomes are linked to two preterminal proteins, one for each 5' end. These new genomes are encapsidated in the nucleus, and during capsid maturation by viral protease, preterminal protein is first cleaved into intermediary (iTP), then into mature TP. May play a role in host nuclear matrix localization of genomic DNA. The polypeptide is Preterminal protein (Canine adenovirus serotype 1 (strain CLL) (CAdV-1)).